The primary structure comprises 354 residues: Guanine nucleotide-binding protein G(t) subunit alpha-3 (354 aa).

The disordered stretch occupies residues 1 to 27; sequence MGSGISSESKESAKRSKELEKKLQEDA. Glycine 2 carries N-myristoyl glycine lipidation. Over residues 8–27 the composition is skewed to basic and acidic residues; the sequence is ESKESAKRSKELEKKLQEDA. Residues 32 to 354 form the G-alpha domain; sequence RTVKLLLLGA…KENLKDCGLF (323 aa). The interval 35 to 48 is G1 motif; it reads KLLLLGAGESGKST. Residues 40 to 47, 175 to 181, 200 to 204, 269 to 272, and alanine 326 each bind GTP; these read GAGESGKS, LHSRVKT, DVGGQ, and NKKD. Mg(2+) is bound by residues serine 47 and threonine 181. Residues 173–181 are G2 motif; the sequence is DVLHSRVKT. The G3 motif stretch occupies residues 196-205; that stretch reads FRMFDVGGQR. A G4 motif region spans residues 265-272; that stretch reads VLFLNKKD. A G5 motif region spans residues 324–329; it reads TCATDT.

The protein belongs to the G-alpha family. G(i/o/t/z) subfamily. As to quaternary structure, g proteins are composed of 3 units; alpha, beta and gamma, respectively GNAT3, GNB1 and GNG13 for Gustducin heterotrimer for bitter taste transduction. The alpha chain contains the guanine nucleotide binding site. Component of the TAS2R14-GNAT3 complex, consisting of TAS2R14, GNAT3, GNB1 and GNG2; within the complex interacts with TAS2R14; this complex plays a role in the perception of bitterness. Gustducin heterotrimer may also be composed of GNAT3, GNB3 and GNG13. Post-translationally, potential N-myristoylation may anchor alpha-subunit to the inner surface of plasma membrane. Expressed in taste buds (sensory organs of clustered epithelial cells) of the circumvallate, foliate and fungiform papillae of the tongue, as well as in nasoincisor, palatal and epiglottal taste buds at protein level. Expressed in enteroendocrine of the gut, in the lumenal pole of a subset of brush cells lining the stomach and the intestine at protein level. Detected in solitary cells throughout the respiratory track. Expressed also in spermatozoa.

It localises to the cytoplasm. Functionally, guanine nucleotide-binding protein (G protein) alpha subunit playing a prominent role in bitter and sweet taste transduction as well as in umami (monosodium glutamate, monopotassium glutamate, and inosine monophosphate) taste transduction. Transduction by this alpha subunit involves coupling of specific cell-surface receptors with a cGMP-phosphodiesterase; Activation of phosphodiesterase lowers intracellular levels of cAMP and cGMP which may open a cyclic nucleotide-suppressible cation channel leading to influx of calcium, ultimately leading to release of neurotransmitter. Indeed, denatonium and strychnine induce transient reduction in cAMP and cGMP in taste tissue, whereas this decrease is inhibited by GNAT3 antibody. Gustducin heterotrimer transduces response to bitter and sweet compounds via regulation of phosphodiesterase for alpha subunit, as well as via activation of phospholipase C for beta and gamma subunits, with ultimate increase inositol trisphosphate and increase of intracellular Calcium. GNAT3 can functionally couple to taste receptors to transmit intracellular signal: receptor heterodimer TAS1R2/TAS1R3 senses sweetness and TAS1R1/TAS1R3 transduces umami taste, whereas the T2R family GPCRs act as bitter sensors. Also functions as lumenal sugar sensors in the gut to control the expression of the Na+-glucose transporter SGLT1 in response to dietaty sugar, as well as the secretion of Glucagon-like peptide-1, GLP-1 and glucose-dependent insulinotropic polypeptide, GIP. Thus, may modulate the gut capacity to absorb sugars, with implications for the prevention and treatment of malabsorption syndromes and diet-related disorders including diabetes and obesity. The protein is Guanine nucleotide-binding protein G(t) subunit alpha-3 (Gnat3) of Rattus norvegicus (Rat).